Reading from the N-terminus, the 307-residue chain is tRNA pseudouridine synthase B (307 aa).

The active-site Nucleophile is the aspartate 38.

It belongs to the pseudouridine synthase TruB family. Type 1 subfamily.

The catalysed reaction is uridine(55) in tRNA = pseudouridine(55) in tRNA. Its function is as follows. Responsible for synthesis of pseudouridine from uracil-55 in the psi GC loop of transfer RNAs. The sequence is that of tRNA pseudouridine synthase B from Bacillus cereus (strain ATCC 10987 / NRS 248).